A 67-amino-acid chain; its full sequence is Probable Sec-independent protein translocase protein TatE (67 aa).

Residues 4–21 (ISITKLLVVAALVVLLFG) traverse the membrane as a helical segment.

It belongs to the TatA/E family. TatE subfamily.

It is found in the cell inner membrane. In terms of biological role, part of the twin-arginine translocation (Tat) system that transports large folded proteins containing a characteristic twin-arginine motif in their signal peptide across membranes. TatE shares overlapping functions with TatA. In Enterobacter cloacae subsp. cloacae (strain ATCC 13047 / DSM 30054 / NBRC 13535 / NCTC 10005 / WDCM 00083 / NCDC 279-56), this protein is Probable Sec-independent protein translocase protein TatE.